The sequence spans 100 residues: ESAT-6-like protein EsxB (100 aa).

The protein belongs to the WXG100 family. CFP-10 subfamily. In terms of assembly, forms a tight 1:1 complex with EsxA.

Its subcellular location is the secreted. Its function is as follows. A secreted protein that might play a role in virulence. Might serve as a chaperone to prevent uncontrolled membrane lysis by its partner EsxA. The polypeptide is ESAT-6-like protein EsxB (esxB) (Mycobacterium leprae (strain TN)).